A 257-amino-acid chain; its full sequence is Phosphonates import ATP-binding protein PhnC (257 aa).

In terms of domain architecture, ABC transporter spans 2–246 (IEFRNVSKVY…KFAEIYGDVA (245 aa)). Position 35–42 (35–42 (GLSGAGKS)) interacts with ATP.

The protein belongs to the ABC transporter superfamily. Phosphonates importer (TC 3.A.1.9.1) family. The complex is composed of two ATP-binding proteins (PhnC), two transmembrane proteins (PhnE) and a solute-binding protein (PhnD).

The protein localises to the cell membrane. It carries out the reaction phosphonate(out) + ATP + H2O = phosphonate(in) + ADP + phosphate + H(+). Its function is as follows. Part of the ABC transporter complex PhnCDE involved in phosphonates import. Responsible for energy coupling to the transport system. In Bacillus cereus (strain ZK / E33L), this protein is Phosphonates import ATP-binding protein PhnC.